Reading from the N-terminus, the 564-residue chain is Isocitrate dehydrogenase kinase/phosphatase (564 aa).

ATP is bound by residues 315 to 321 (APGVKGM) and Lys-336. Asp-371 is a catalytic residue.

The protein belongs to the AceK family.

The protein resides in the cytoplasm. The enzyme catalyses L-seryl-[isocitrate dehydrogenase] + ATP = O-phospho-L-seryl-[isocitrate dehydrogenase] + ADP + H(+). Its function is as follows. Bifunctional enzyme which can phosphorylate or dephosphorylate isocitrate dehydrogenase (IDH) on a specific serine residue. This is a regulatory mechanism which enables bacteria to bypass the Krebs cycle via the glyoxylate shunt in response to the source of carbon. When bacteria are grown on glucose, IDH is fully active and unphosphorylated, but when grown on acetate or ethanol, the activity of IDH declines drastically concomitant with its phosphorylation. The sequence is that of Isocitrate dehydrogenase kinase/phosphatase from Idiomarina loihiensis (strain ATCC BAA-735 / DSM 15497 / L2-TR).